We begin with the raw amino-acid sequence, 549 residues long: Chaperonin GroEL (549 aa).

ATP-binding positions include 29–32, K50, 86–90, G414, 477–479, and D493; these read TLGP, DGTTT, and NAL.

This sequence belongs to the chaperonin (HSP60) family. In terms of assembly, forms a cylinder of 14 subunits composed of two heptameric rings stacked back-to-back. Interacts with the co-chaperonin GroES.

It is found in the cytoplasm. The catalysed reaction is ATP + H2O + a folded polypeptide = ADP + phosphate + an unfolded polypeptide.. Functionally, together with its co-chaperonin GroES, plays an essential role in assisting protein folding. The GroEL-GroES system forms a nano-cage that allows encapsulation of the non-native substrate proteins and provides a physical environment optimized to promote and accelerate protein folding. This chain is Chaperonin GroEL, found in Leptospira biflexa serovar Patoc (strain Patoc 1 / Ames).